A 441-amino-acid polypeptide reads, in one-letter code: Lysine histidine transporter 2 (441 aa).

Topologically, residues 1-32 are cytoplasmic; the sequence is MGNSEMSASEVAAAKQKNVDDWLPITSSRNAK. Residues 33 to 53 traverse the membrane as a helical segment; it reads WWYSAFHNVTAMVGAGVLSLP. Topologically, residues 54 to 58 are extracellular; the sequence is YAMSN. A helical membrane pass occupies residues 59–79; sequence LGWGPGVTIMVMSWIITLYTL. The Cytoplasmic portion of the chain corresponds to 80–110; sequence WQMVEMHEIVPGKRLDRYHELGQHAFGEKLG. Residues 111–131 form a helical membrane-spanning segment; that stretch reads LWIVVPQQLIVEVGVDIVYMV. At 132–152 the chain is on the extracellular side; the sequence is TGGASLKKVHQLVCPDCKEIR. A helical transmembrane segment spans residues 153-173; it reads TTFWIMIFASVHFVISHLPNF. Topologically, residues 174 to 175 are cytoplasmic; it reads NS. The helical transmembrane segment at 176–196 threads the bilayer; it reads ISIISLAAAVMSLTYSTIAWA. Residues 197–222 lie on the Extracellular side of the membrane; it reads ASVHKGVHPDVDYSPRASTDVGKVFN. Residues 223 to 243 form a helical membrane-spanning segment; the sequence is FLNALGDVAFAYAGHNVVLEI. The Cytoplasmic portion of the chain corresponds to 244 to 263; that stretch reads QATIPSTPEMPSKVPMWRGV. The helical transmembrane segment at 264 to 284 threads the bilayer; the sequence is IVAYIVVAICYFPVAFLGYYI. The Extracellular portion of the chain corresponds to 285–300; the sequence is FGNSVDDNILITLEKP. The helical transmembrane segment at 301–321 threads the bilayer; the sequence is IWLIAMANMFVVIHVIGSYQI. At 322–347 the chain is on the cytoplasmic side; it reads FAMPVFDMLETVLVKKMNFNPSFKLR. Residues 348–370 traverse the membrane as a helical segment; it reads FITRSLYVAFTMIVAICVPFFGG. Topologically, residues 371-373 are extracellular; it reads LLG. The chain crosses the membrane as a helical span at residues 374–396; it reads FFGGFAFAPTTYYLPCIMWLVLK. Residues 397–406 are Cytoplasmic-facing; that stretch reads KPKRFGLSWT. Residues 407–427 form a helical membrane-spanning segment; it reads ANWFCIIVGVLLTILAPIGGL. Residues 428–441 lie on the Extracellular side of the membrane; it reads RTIIINAKTYKFFS.

Belongs to the amino acid/polyamine transporter 2 family. Amino acid/auxin permease (AAAP) (TC 2.A.18.2) subfamily. Expressed in flower buds and to lower levels in leaves and stems. Not detected in roots and siliques. Restricted to the tapetum cell layer.

It is found in the cell membrane. Its activity is regulated as follows. Inhibited by diethylstibestrol (DES), 2,4-dinitrophenol (DNP) and carbonlycyanide m-chlorophenylhydrazone (CCCP). Amino acid-proton symporter. Transporter with a broad specificity for neutral and acidic amino acids. Basic amino acids are only marginally transported. Involved in import of amino acids into the tapetum cells for synthesis of compounds important for microspore structure. This is Lysine histidine transporter 2 (LHT2) from Arabidopsis thaliana (Mouse-ear cress).